A 446-amino-acid chain; its full sequence is Oxysterols receptor LXR-beta (446 aa).

The tract at residues 1–69 is disordered; that stretch reads MSSPTSSLDT…PERKRKKGPA (69 aa). Positions 1-76 are transactivation AF-1; required for ligand-independent transactivation function; that stretch reads MSSPTSSLDT…GPAPKMLGHE (76 aa). Residues 17–28 show a composition bias toward low complexity; the sequence is SPQPSTSATSPT. Residues 75–152 constitute a DNA-binding region (nuclear receptor); it reads HELCRVCGDK…AGMREQCVLS (78 aa). 2 NR C4-type zinc fingers span residues 78–98 and 116–140; these read CRVCGDKASGFHYNVLSCEGC and CRGSGTCQMDAFMRRKCQLCRLRKC. The disordered stretch occupies residues 159–201; the sequence is KRIQKQQQQQPPPPSEPAASSSGRPAASPGTSEASSQGSGEGE. The segment covering 175-196 has biased composition (low complexity); the sequence is PAASSSGRPAASPGTSEASSQG. Residues 205–446 form a transactivation AF-2; required for ligand-dependent transactivation function; mediates interaction with CCAR2 region; that stretch reads LTAAQELMIQ…LLSEIWDVHE (242 aa). An NR LBD domain is found at 208–446; sequence AQELMIQQLV…LLSEIWDVHE (239 aa). Glycyl lysine isopeptide (Lys-Gly) (interchain with G-Cter in SUMO2) cross-links involve residues Lys395 and Lys433.

The protein belongs to the nuclear hormone receptor family. NR1 subfamily. In terms of assembly, forms a heterodimer with RXR. Interacts with CCAR2 (via N-terminus) in a ligand-independent manner. Interacts (when sumoylated) with GPS2; interaction with GPS2 onto hepatic acute phase protein promoters prevents N-Cor corepressor complex dissociation. Interacts with ABCA12 and ABCA1; this interaction is required for ABCA1 localization to the cell surface and is necessary for its normal activity and stability. Sumoylated by SUMO2 at Lys-395 and Lys-433 during the hepatic acute phase response, leading to promote interaction with GPS2 and prevent N-Cor corepressor complex dissociation. Ubiquitous.

It localises to the nucleus. In terms of biological role, nuclear receptor that exhibits a ligand-dependent transcriptional activation activity. Binds preferentially to double-stranded oligonucleotide direct repeats having the consensus half-site sequence 5'-AGGTCA-3' and 4-nt spacing (DR-4). Regulates cholesterol uptake through MYLIP-dependent ubiquitination of LDLR, VLDLR and LRP8; DLDLR and LRP8. Interplays functionally with RORA for the regulation of genes involved in liver metabolism. Induces LPCAT3-dependent phospholipid remodeling in endoplasmic reticulum (ER) membranes of hepatocytes, driving SREBF1 processing and lipogenesis. Via LPCAT3, triggers the incorporation of arachidonate into phosphatidylcholines of ER membranes, increasing membrane dynamics and enabling triacylglycerols transfer to nascent very low-density lipoprotein (VLDL) particles. Via LPCAT3 also counteracts lipid-induced ER stress response and inflammation, likely by modulating SRC kinase membrane compartmentalization and limiting the synthesis of lipid inflammatory mediators. Plays an anti-inflammatory role during the hepatic acute phase response by acting as a corepressor: inhibits the hepatic acute phase response by preventing dissociation of the N-Cor corepressor complex. The sequence is that of Oxysterols receptor LXR-beta (Nr1h2) from Mus musculus (Mouse).